The sequence spans 461 residues: Carbamoyl phosphate synthase arginine-specific small chain (461 aa).

The 188-residue stretch at 240–427 (HVALIDCGVK…LENVQMYKDN (188 aa)) folds into the Glutamine amidotransferase type-1 domain. Residue Cys-316 is the Nucleophile of the active site. Active-site residues include His-400 and Glu-402.

Belongs to the CarA family. In terms of assembly, heterodimer composed of 2 chains; the small (or glutamine) chain promotes the hydrolysis of glutamine to ammonia, which is used by the large (or ammonia) chain to synthesize carbamoyl phosphate.

The protein localises to the cytoplasm. It carries out the reaction hydrogencarbonate + L-glutamine + 2 ATP + H2O = carbamoyl phosphate + L-glutamate + 2 ADP + phosphate + 2 H(+). The catalysed reaction is L-glutamine + H2O = L-glutamate + NH4(+). The protein operates within amino-acid biosynthesis; L-arginine biosynthesis; carbamoyl phosphate from bicarbonate: step 1/1. Its function is as follows. Small subunit of the arginine-specific carbamoyl phosphate synthase (CPSase). CPSase catalyzes the formation of carbamoyl phosphate from the ammonia moiety of glutamine, carbonate, and phosphate donated by ATP, constituting the first step of 2 biosynthetic pathways, one leading to arginine and/or urea and the other to pyrimidine nucleotides. The small subunit (glutamine amidotransferase) binds and cleaves glutamine to supply the large subunit with the substrate ammonia. The protein is Carbamoyl phosphate synthase arginine-specific small chain (CPA1) of Chaetomium globosum (strain ATCC 6205 / CBS 148.51 / DSM 1962 / NBRC 6347 / NRRL 1970) (Soil fungus).